We begin with the raw amino-acid sequence, 120 residues long: Large ribosomal subunit protein uL18 (120 aa).

This sequence belongs to the universal ribosomal protein uL18 family. Part of the 50S ribosomal subunit; part of the 5S rRNA/L5/L18/L25 subcomplex. Contacts the 5S and 23S rRNAs.

This is one of the proteins that bind and probably mediate the attachment of the 5S RNA into the large ribosomal subunit, where it forms part of the central protuberance. The polypeptide is Large ribosomal subunit protein uL18 (Rhodospirillum centenum (strain ATCC 51521 / SW)).